A 92-amino-acid chain; its full sequence is PqqA binding protein (92 aa).

Belongs to the PqqD family. In terms of assembly, monomer. Interacts with PqqE.

The protein operates within cofactor biosynthesis; pyrroloquinoline quinone biosynthesis. Functions as a PqqA binding protein and presents PqqA to PqqE, in the pyrroloquinoline quinone (PQQ) biosynthetic pathway. This chain is PqqA binding protein, found in Xanthomonas euvesicatoria pv. vesicatoria (strain 85-10) (Xanthomonas campestris pv. vesicatoria).